The chain runs to 153 residues: Interleukin-4 (153 aa).

Residues Met1–Gly24 form the signal peptide. 3 disulfides stabilise this stretch: Cys27–Cys151, Cys48–Cys89, and Cys70–Cys123. Asn62 carries an N-linked (GlcNAc...) asparagine glycan.

It belongs to the IL-4/IL-13 family.

Its subcellular location is the secreted. Its function is as follows. Participates in at least several B-cell activation processes as well as of other cell types. It is a costimulator of DNA-synthesis. It induces the expression of class II MHC molecules on resting B-cells. It enhances both secretion and cell surface expression of IgE and IgG1. It also regulates the expression of the low affinity Fc receptor for IgE (CD23) on both lymphocytes and monocytes. Positively regulates IL31RA expression in macrophages. Stimulates autophagy in dendritic cells by interfering with mTORC1 signaling and through the induction of RUFY4. The polypeptide is Interleukin-4 (IL4) (Cercocebus atys (Sooty mangabey)).